The chain runs to 494 residues: DNA-directed DNA/RNA polymerase mu (494 aa).

The interval Met-1–Ser-24 is disordered. Ser-12 carries the post-translational modification Phosphoserine. One can recognise a BRCT domain in the interval Pro-22–Arg-122. The involved in ssDNA binding stretch occupies residues Arg-323–Asp-332. Positions 330, 332, and 418 each coordinate Mg(2+).

The protein belongs to the DNA polymerase type-X family. Mg(2+) serves as cofactor. Expressed in a number of tissues. Abundant in thymus.

It is found in the nucleus. It carries out the reaction DNA(n) + a 2'-deoxyribonucleoside 5'-triphosphate = DNA(n+1) + diphosphate. In terms of biological role, gap-filling polymerase involved in repair of DNA double-strand breaks by non-homologous end joining (NHEJ). Participates in immunoglobulin (Ig) light chain gene rearrangement in V(D)J recombination. The sequence is that of DNA-directed DNA/RNA polymerase mu (POLM) from Homo sapiens (Human).